Reading from the N-terminus, the 80-residue chain is Protein FAM229B (80 aa).

A disordered region spans residues 1 to 45; it reads MPFRFGTQPRRFPVEGGDSSIELESGLSSSASCTGKETSPNRQLR. Residues 15–32 are compositionally biased toward low complexity; that stretch reads EGGDSSIELESGLSSSAS. Over residues 33-42 the composition is skewed to polar residues; it reads CTGKETSPNR.

Belongs to the FAM229 family.

The sequence is that of Protein FAM229B (Fam229b) from Mus musculus (Mouse).